The primary structure comprises 472 residues: Calcitonin gene-related peptide type 1 receptor (472 aa).

The signal sequence occupies residues 1 to 28; sequence MGLLLRSALFKYIIIVLIMLNLRGYVLA. The Extracellular segment spans residues 29-149; it reads EQEQGSQIPL…FTHEKVKTAL (121 aa). Intrachain disulfides connect Cys58/Cys84, Cys75/Cys115, and Cys98/Cys137. N-linked (GlcNAc...) asparagine glycans are attached at residues Asn76, Asn128, and Asn133. The helical transmembrane segment at 150 to 174 threads the bilayer; sequence NLYYLTIIGHGLSIASLLISLGIFF. Residues 175–185 lie on the Cytoplasmic side of the membrane; it reads YFKNLSCQRIT. A helical membrane pass occupies residues 186–208; the sequence is LHKNLFFSFVCNSIITIISLSAV. Topologically, residues 209–219 are extracellular; it reads ANNQALVATNP. The helical transmembrane segment at 220–248 threads the bilayer; that stretch reads VSCKISQFIHLYLMGCNYFWMLCEGIYLH. The Cytoplasmic segment spans residues 249–262; that stretch reads TLIVVAVFAEKQHL. The chain crosses the membrane as a helical span at residues 263–283; that stretch reads MWYYLLGWGFPLIPACIHAVA. At 284–299 the chain is on the extracellular side; that stretch reads RSLYYNDNCWISSETH. The helical transmembrane segment at 300-324 threads the bilayer; that stretch reads LLYIIHGPICAALLVNLFFLLNIVR. Residues 325–339 lie on the Cytoplasmic side of the membrane; the sequence is VLITKLKVTHQAESN. The helical transmembrane segment at 340–361 threads the bilayer; it reads LYMKAVRATLILVPLLGIEFVL. Residues 362–376 are Extracellular-facing; sequence FPWKPEGRIAEEIYD. A helical transmembrane segment spans residues 377-397; it reads YVMHILMHYQGLLVATIFCFF. Residues 398 to 472 lie on the Cytoplasmic side of the membrane; it reads NGEVQAVLKR…VFFKTEKQYM (75 aa).

The protein belongs to the G-protein coupled receptor 2 family.

It localises to the cell membrane. In terms of biological role, may function as G protein-coupled receptor for calcitonin-gene-related peptides and adrenomedullin. Specificity may be modulated by accessory proteins. May activate cAMP-dependent pathway. This Xenopus tropicalis (Western clawed frog) protein is Calcitonin gene-related peptide type 1 receptor (calcrl).